Consider the following 260-residue polypeptide: Triosephosphate isomerase (260 aa).

11–13 contacts substrate; the sequence is NWK. His-103 serves as the catalytic Electrophile. Glu-175 serves as the catalytic Proton acceptor. Residues Gly-181, Ser-220, and 241–242 each bind substrate; that span reads GG.

It belongs to the triosephosphate isomerase family. In terms of assembly, homodimer.

Its subcellular location is the cytoplasm. The catalysed reaction is D-glyceraldehyde 3-phosphate = dihydroxyacetone phosphate. The protein operates within carbohydrate biosynthesis; gluconeogenesis. It participates in carbohydrate degradation; glycolysis; D-glyceraldehyde 3-phosphate from glycerone phosphate: step 1/1. In terms of biological role, involved in the gluconeogenesis. Catalyzes stereospecifically the conversion of dihydroxyacetone phosphate (DHAP) to D-glyceraldehyde-3-phosphate (G3P). The sequence is that of Triosephosphate isomerase from Shewanella sp. (strain MR-4).